We begin with the raw amino-acid sequence, 300 residues long: Ribosomal protein L11 methyltransferase (300 aa).

Residues threonine 144, glycine 165, aspartate 187, and asparagine 235 each coordinate S-adenosyl-L-methionine.

This sequence belongs to the methyltransferase superfamily. PrmA family.

The protein localises to the cytoplasm. It catalyses the reaction L-lysyl-[protein] + 3 S-adenosyl-L-methionine = N(6),N(6),N(6)-trimethyl-L-lysyl-[protein] + 3 S-adenosyl-L-homocysteine + 3 H(+). Functionally, methylates ribosomal protein L11. This chain is Ribosomal protein L11 methyltransferase, found in Prochlorococcus marinus (strain MIT 9515).